Reading from the N-terminus, the 138-residue chain is Transcription antitermination protein NusB (138 aa).

The protein belongs to the NusB family.

In terms of biological role, involved in transcription antitermination. Required for transcription of ribosomal RNA (rRNA) genes. Binds specifically to the boxA antiterminator sequence of the ribosomal RNA (rrn) operons. This Leptospira interrogans serogroup Icterohaemorrhagiae serovar copenhageni (strain Fiocruz L1-130) protein is Transcription antitermination protein NusB.